The sequence spans 1026 residues: Multidrug resistance protein MdtC (1026 aa).

Topologically, residues 1-6 (MRFFAL) are cytoplasmic. Residues 7-29 (FIYRPVATILIAAAITLCGILGF) traverse the membrane as a helical segment. The Periplasmic segment spans residues 30–335 (RLLPVAPLPQ…TIRASLQEVE (306 aa)). A helical membrane pass occupies residues 336-353 (ETLAISVALVILVVFLFL). Topologically, residues 354–359 (RSGRAT) are cytoplasmic. The helical transmembrane segment at 360-379 (LIPAVAVPVSLIGTFAAMYL) threads the bilayer. At 380-388 (CGFSLNNLS) the chain is on the periplasmic side. A helical membrane pass occupies residues 389–411 (LMALTIATGFVVDDAIVVLENIA). The Cytoplasmic segment spans residues 412 to 430 (RHLEARMKPLQAALQGTRE). The chain crosses the membrane as a helical span at residues 431–453 (VGFTVISMSLSLVAVFLPLLLMG). The Periplasmic portion of the chain corresponds to 454 to 467 (GLPGRLLREFAVTL). The chain crosses the membrane as a helical span at residues 468 to 490 (SVAIGISLVVSLTLTPMMCGWML). Residues 491–852 (KSSKPRTQPR…QVFQQTMNSQ (362 aa)) lie on the Cytoplasmic side of the membrane. Residues 853–875 (LILIVAAIATVYIVLGILYESYV) form a helical membrane-spanning segment. Residues 876-894 (HPLTILSTLPSAGVGALLA) lie on the Periplasmic side of the membrane. A helical membrane pass occupies residues 895 to 917 (LELFNAPFSLIALIGIMLLIGIV). The Cytoplasmic segment spans residues 918 to 947 (KKNAIMMVDFALEAQRSGGLTPEQAIFQAC). A helical membrane pass occupies residues 948–970 (LLRFRPIMMTTLAALFGALPLVL). Residues 971–984 (SGGDGSELRQPLGI) lie on the Periplasmic side of the membrane. Residues 985–1007 (TIVGGLVMSQLLTLYTTPVVYLF) traverse the membrane as a helical segment. Residues 1008-1026 (FDRLRLRFSRKNSKPVVEI) lie on the Cytoplasmic side of the membrane.

This sequence belongs to the resistance-nodulation-cell division (RND) (TC 2.A.6) family. MdtC subfamily. Part of a tripartite efflux system composed of MdtA, MdtB and MdtC. MdtC forms a heteromultimer with MdtB.

Its subcellular location is the cell inner membrane. This is Multidrug resistance protein MdtC from Salmonella typhi.